We begin with the raw amino-acid sequence, 196 residues long: [1-hydroxy-2-(trimethylamino)ethyl]phosphonate dioxygenase (glycine-betaine-forming) (196 aa).

Y30 serves as a coordination point for [(1R)-1-hydroxy-2-(trimethylamino)ethyl]phosphonate. Y30, H40, H64, and D65 together coordinate Fe cation. The region spanning 37–156 (MAEHMLQGAT…VAEFEKNPNL (120 aa)) is the HD domain. H68, H86, H109, K113, S131, S134, and R163 together coordinate [(1R)-1-hydroxy-2-(trimethylamino)ethyl]phosphonate. Fe cation contacts are provided by H86 and H109. D166 is a Fe cation binding site.

Requires Fe cation as cofactor.

The catalysed reaction is [(1R)-1-hydroxy-2-(trimethylamino)ethyl]phosphonate + O2 = glycine betaine + phosphate + 2 H(+). Involved in the degradation of the naturally occurring organophosphonate 2-(trimethylammonio)ethylphosphonate (TMAEP). Catalyzes the O(2)-dependent cleavage of (R)-1-hydroxy-2-(trimethylammonio)ethylphosphonate (OH-TMAEP) to yield glycine betaine and phosphate. Is highly specific for its N-trimethylated substrate. The protein is [1-hydroxy-2-(trimethylamino)ethyl]phosphonate dioxygenase (glycine-betaine-forming) of Leisingera caerulea (Phaeobacter caeruleus).